Reading from the N-terminus, the 445-residue chain is C4-dicarboxylate transport protein 2 (445 aa).

The next 8 membrane-spanning stretches (helical) occupy residues 24–44 (ILYV…WLFP), 62–82 (LIKM…IAHI), 96–116 (LVYF…VGNL), 163–183 (GDIL…MALG), 201–221 (FGVI…AMAF), 237–257 (LIAL…GLIA), 334–354 (ALGV…AMLT), and 366–386 (FITL…GMAI).

This sequence belongs to the dicarboxylate/amino acid:cation symporter (DAACS) (TC 2.A.23) family.

The protein localises to the cell inner membrane. In terms of biological role, responsible for the transport of dicarboxylates such as succinate, fumarate, and malate from the periplasm across the membrane. This Bradyrhizobium sp. (strain ORS 278) protein is C4-dicarboxylate transport protein 2.